The sequence spans 146 residues: UPF0735 ACT domain-containing protein CHY_1913 (146 aa).

The 76-residue stretch at 70–145 (TLALNLEHRA…GVSKVELVGQ (76 aa)) folds into the ACT domain.

Belongs to the UPF0735 family.

The sequence is that of UPF0735 ACT domain-containing protein CHY_1913 from Carboxydothermus hydrogenoformans (strain ATCC BAA-161 / DSM 6008 / Z-2901).